Reading from the N-terminus, the 160-residue chain is 2-C-methyl-D-erythritol 2,4-cyclodiphosphate synthase (160 aa).

A divalent metal cation contacts are provided by Asp-9 and His-11. Residues 9 to 11 and 35 to 36 each bind 4-CDP-2-C-methyl-D-erythritol 2-phosphate; these read DVH and HS. His-43 provides a ligand contact to a divalent metal cation. Residues 57–59, 62–66, and Phe-140 each bind 4-CDP-2-C-methyl-D-erythritol 2-phosphate; these read DIG and FPDND.

Belongs to the IspF family. As to quaternary structure, homotrimer. A divalent metal cation serves as cofactor.

It carries out the reaction 4-CDP-2-C-methyl-D-erythritol 2-phosphate = 2-C-methyl-D-erythritol 2,4-cyclic diphosphate + CMP. Its pathway is isoprenoid biosynthesis; isopentenyl diphosphate biosynthesis via DXP pathway; isopentenyl diphosphate from 1-deoxy-D-xylulose 5-phosphate: step 4/6. Its function is as follows. Involved in the biosynthesis of isopentenyl diphosphate (IPP) and dimethylallyl diphosphate (DMAPP), two major building blocks of isoprenoid compounds. Catalyzes the conversion of 4-diphosphocytidyl-2-C-methyl-D-erythritol 2-phosphate (CDP-ME2P) to 2-C-methyl-D-erythritol 2,4-cyclodiphosphate (ME-CPP) with a corresponding release of cytidine 5-monophosphate (CMP). The protein is 2-C-methyl-D-erythritol 2,4-cyclodiphosphate synthase of Fusobacterium nucleatum subsp. nucleatum (strain ATCC 25586 / DSM 15643 / BCRC 10681 / CIP 101130 / JCM 8532 / KCTC 2640 / LMG 13131 / VPI 4355).